We begin with the raw amino-acid sequence, 116 residues long: Large ribosomal subunit protein bL19 (116 aa).

It belongs to the bacterial ribosomal protein bL19 family.

Functionally, this protein is located at the 30S-50S ribosomal subunit interface and may play a role in the structure and function of the aminoacyl-tRNA binding site. The sequence is that of Large ribosomal subunit protein bL19 from Actinobacillus succinogenes (strain ATCC 55618 / DSM 22257 / CCUG 43843 / 130Z).